Here is a 569-residue protein sequence, read N- to C-terminus: Melanophilin (569 aa).

A RabBD domain is found at 4 to 124; that stretch reads KLDLSKLTDD…MGSLEWYYGH (121 aa). The segment at 58–112 adopts an FYVE-type zinc-finger fold; the sequence is HLNETHCARCLQPYRLLVAPKRQCLDCHLFTCQDCSHAHPEEEGWLCDPCHLARV. Residues 143–430 are disordered; the sequence is GRLQGGGGPE…MQPGRTTDQE (288 aa). Composition is skewed to basic and acidic residues over residues 352–362 and 379–390; these read ETLKRKLEEMT and EEEAGLNRKTSI. Residues 404–415 show a composition bias toward polar residues; the sequence is SGQTSRQETSPR. A coiled-coil region spans residues 431–465; it reads LLELEDRVAVTASEVQQVESEVSNIKSKIAALQAA. A disordered region spans residues 490 to 569; that stretch reads GRLGQTPKDP…FAKPVMTQRP (80 aa). Residues 526–535 show a composition bias toward basic and acidic residues; it reads SQDKAGDSFD.

As to quaternary structure, binds RAB27A that has been activated by GTP-binding via its N-terminus. Binds MYO5A via its C-terminal coiled coil domain.

It is found in the melanosome. Functionally, rab effector protein involved in melanosome transport. Serves as link between melanosome-bound RAB27A and the motor protein MYO5A. The polypeptide is Melanophilin (MLPH) (Felis catus (Cat)).